Consider the following 181-residue polypeptide: PLAT domain-containing protein 1 (181 aa).

Positions 1–14 (MARRDVLLPFLLLL) are cleaved as a signal peptide. A15 carries the post-translational modification N-acetylalanine. Residues 29-156 (CVYTFYLRTG…SPYELTAVRN (128 aa)) enclose the PLAT domain.

In terms of tissue distribution, expressed in root tips, pericycle cells, lateral root primordia, stomata, leaf vasculature, hydathodes and floral organs.

It is found in the endoplasmic reticulum. Its subcellular location is the plastid. It localises to the chloroplast. The protein resides in the plastoglobule. Positive regulator of abiotic stress tolerance involved in the regulation of plant growth. May be a downstream target of the abscisic acid (ABA) signaling pathway. The protein is PLAT domain-containing protein 1 of Arabidopsis thaliana (Mouse-ear cress).